The sequence spans 449 residues: Probable glycine dehydrogenase (decarboxylating) subunit 1 (449 aa).

It belongs to the GcvP family. N-terminal subunit subfamily. The glycine cleavage system is composed of four proteins: P, T, L and H. In this organism, the P 'protein' is a heterodimer of two subunits.

It carries out the reaction N(6)-[(R)-lipoyl]-L-lysyl-[glycine-cleavage complex H protein] + glycine + H(+) = N(6)-[(R)-S(8)-aminomethyldihydrolipoyl]-L-lysyl-[glycine-cleavage complex H protein] + CO2. Functionally, the glycine cleavage system catalyzes the degradation of glycine. The P protein binds the alpha-amino group of glycine through its pyridoxal phosphate cofactor; CO(2) is released and the remaining methylamine moiety is then transferred to the lipoamide cofactor of the H protein. The chain is Probable glycine dehydrogenase (decarboxylating) subunit 1 from Pyrococcus abyssi (strain GE5 / Orsay).